A 586-amino-acid polypeptide reads, in one-letter code: Alpha-1,2-mannosyltransferase MNN5 (586 aa).

The first 29 residues, 1 to 29 (MLIRLKKRKILQVIVSAVVLILFFCSVHN), serve as a signal peptide directing secretion. 4 N-linked (GlcNAc...) asparagine glycosylation sites follow: Asn113, Asn136, Asn259, and Asn264.

Belongs to the MNN1/MNT family. Interacts with SVP26. Post-translationally, glycosylated.

The protein resides in the golgi apparatus. It is found in the cis-Golgi network. It functions in the pathway protein modification; protein glycosylation. In terms of biological role, responsible for addition of first and second mannose residues to the outer chain of core N-linked polysaccharides and to O-linked mannotriose. Implicated in late Golgi modifications. In Saccharomyces cerevisiae (strain ATCC 204508 / S288c) (Baker's yeast), this protein is Alpha-1,2-mannosyltransferase MNN5 (MNN5).